A 308-amino-acid polypeptide reads, in one-letter code: Lipoyl synthase (308 aa).

C48, C53, C59, C74, C78, C81, and S287 together coordinate [4Fe-4S] cluster. Residues 60–277 (WSRHTATYLA…RSVGEALGLF (218 aa)) form the Radical SAM core domain.

It belongs to the radical SAM superfamily. Lipoyl synthase family. [4Fe-4S] cluster is required as a cofactor.

The protein localises to the cytoplasm. The enzyme catalyses [[Fe-S] cluster scaffold protein carrying a second [4Fe-4S](2+) cluster] + N(6)-octanoyl-L-lysyl-[protein] + 2 oxidized [2Fe-2S]-[ferredoxin] + 2 S-adenosyl-L-methionine + 4 H(+) = [[Fe-S] cluster scaffold protein] + N(6)-[(R)-dihydrolipoyl]-L-lysyl-[protein] + 4 Fe(3+) + 2 hydrogen sulfide + 2 5'-deoxyadenosine + 2 L-methionine + 2 reduced [2Fe-2S]-[ferredoxin]. Its pathway is protein modification; protein lipoylation via endogenous pathway; protein N(6)-(lipoyl)lysine from octanoyl-[acyl-carrier-protein]: step 2/2. In terms of biological role, catalyzes the radical-mediated insertion of two sulfur atoms into the C-6 and C-8 positions of the octanoyl moiety bound to the lipoyl domains of lipoate-dependent enzymes, thereby converting the octanoylated domains into lipoylated derivatives. This chain is Lipoyl synthase, found in Chlamydia muridarum (strain MoPn / Nigg).